Reading from the N-terminus, the 362-residue chain is 2-oxoglutarate-dependent dioxygenase lolO1 (362 aa).

Residues 199–312 (TWNYFLGQPV…RYSLVFFGHL (114 aa)) form the Fe2OG dioxygenase domain. Fe cation contacts are provided by H222, D224, and H280. R303 is a 2-oxoglutarate binding site.

It belongs to the iron/ascorbate-dependent oxidoreductase family. Fe(2+) is required as a cofactor.

It functions in the pathway alkaloid biosynthesis. In terms of biological role, 2-oxoglutarate-dependent dioxygenase; part of the gene cluster that mediates the biosynthesis of loline alkaloids, potent insecticidal agents composed of a pyrrolizidine ring system and an uncommon ether bridge linking carbons 2 and 7. Lolines are structurally differentiated by the various modifications of the L-amino group and include norloline, loline, N-methylloline, N-acetylloline, N-acetylnorloline, and N-formylloline. The first committed step is the condensation of O-acetyl-L-homoserine (derived from L-aspartic acid) and L-proline, probably catalyzed by the gamma-type pyridoxal 5'-phosphate(PLP)-dependent enzyme lolC, to give the diamino diacid, NACPP. Ensuing cyclization, decarboxylation, and acetylation steps yield 1-exo-acetamidopyrrolizidine (AcAP). LolO is required for installation of the ether bridge upon the pathway intermediate, 1-exo-acetamidopyrrolizidine (AcAP). In sequential 2-oxoglutarate- and O(2)-consuming steps, lolO removes hydrogens from C2 and C7 of AcAP to form both carbon-oxygen bonds in N-acetylnorloline (NANL), the precursor to all other lolines. The enzymes lolD, lolE, lolF and lolT have also been proposed to be involved in the ether-bridge installation. Further processing of the exocyclic moiety of NANL by fungal N-acetamidase (LolN), methyltransferase (LolM), and cytochrome P450 (LolP) enzymes, with occasional involvement of a plant acetyltransferase, generates the other known lolines. LolN transforms NANL to norlonine which is monomethylated and dimethylated to respectively lonine and N-methyllonine (NML) by lolM. LolP catalyzes hydroxylation of the methyl group in N-methylloline (NML) and further oxygenation to N-formylloline (NFL). A plant acetyltransferase is responsible for the acetylation of loline to form N-acetylloline (NAL). LolA might interact with aspartate kinase to prevent feedback inhibition of its activity by these end products and thereby promote production of l-homoserine from l-aspartate. The polypeptide is 2-oxoglutarate-dependent dioxygenase lolO1 (Epichloe uncinata (Endophyte fungus)).